Reading from the N-terminus, the 487-residue chain is WAS/WASL-interacting protein family member 1 (487 aa).

Positions 1-14 (MPVPPPPAPPPPPT) are enriched in pro residues. The interval 1 to 487 (MPVPPPPAPP…GAPPLPPIPR (487 aa)) is disordered. Positions 21-31 (EKPSLNKTEQA) are enriched in polar residues. Positions 32–49 (GRNALLSDISKGKKLKKT) constitute a WH2 domain. Arg-33 bears the Asymmetric dimethylarginine mark. The binds actin stretch occupies residues 45-48 (KLKK). A compositionally biased stretch (gly residues) spans 64–100 (GAGGGYGGGSGGGGGGGSSGGGGNFGGGGPPGLGGLF). An omega-N-methylarginine mark is found at Arg-121 and Arg-130. Low complexity predominate over residues 136–147 (PFSSPSGPGRFP). At Ser-138 the chain carries Phosphoserine. Composition is skewed to pro residues over residues 157-170 (PPEP…PPRP) and 178-190 (SLPP…PRPI). Ser-222 bears the Phosphoserine mark. Composition is skewed to pro residues over residues 234-243 (FPRPPLPPTP), 269-285 (VPPP…PSTP), and 293-309 (APPP…PLPP). Residue Ser-324 is modified to Phosphoserine. The span at 328 to 355 (PTPPLPSPGRSGPLPPPPTERPPPPVRD) shows a compositional bias: pro residues. A Phosphothreonine modification is found at Thr-329. Position 334 is a phosphoserine (Ser-334). XRSGPXPPXP motif repeat units lie at residues 336–345 (GRSGPLPPPP), 358–367 (GRSGPLPPPP), and 394–403 (PRSGPRPPLP). Positions 397–418 (GPRPPLPPDRPGAGAPPPPPPS) are enriched in pro residues. Over residues 419 to 428 (TSVRNGFQDS) the composition is skewed to polar residues. The span at 464–478 (ARSESRSGSNRRERG) shows a compositional bias: basic and acidic residues.

The protein belongs to the verprolin family. As to quaternary structure, binds to WAS within the N-terminal region, at a site distinct from the CDC42-binding site. Binds profilin and actin. Interacts with DBNL. Binds to WASL. Interacts with DBNL. Interacts with FNBP1L (via the SH3 domain). In terms of tissue distribution, isoforms were differentially expressed. One isoform was ubiquitously expressed, another was muscle-specific and another was expressed in the liver, heart and testis.

It is found in the cytoplasmic vesicle. The protein resides in the cytoplasm. It localises to the cytoskeleton. Its subcellular location is the cell projection. The protein localises to the ruffle. Plays a role in the reorganization of the actin cytoskeleton. Contributes with NCK1 and GRB2 in the recruitment and activation of WASL. Plays a role in the formation of cell ruffles. May participate in regulating the subcellular localization of WASL, resulting in the disassembly of stress fibers in favor of filopodia formation. This is WAS/WASL-interacting protein family member 1 (Wipf1) from Rattus norvegicus (Rat).